The sequence spans 370 residues: Alanine racemase (370 aa).

Residue Lys-39 is the Proton acceptor; specific for D-alanine of the active site. The residue at position 39 (Lys-39) is an N6-(pyridoxal phosphate)lysine. Residue Arg-137 participates in substrate binding. Tyr-258 acts as the Proton acceptor; specific for L-alanine in catalysis. Met-306 contacts substrate.

It belongs to the alanine racemase family. It depends on pyridoxal 5'-phosphate as a cofactor.

The catalysed reaction is L-alanine = D-alanine. It participates in amino-acid biosynthesis; D-alanine biosynthesis; D-alanine from L-alanine: step 1/1. Catalyzes the interconversion of L-alanine and D-alanine. May also act on other amino acids. This chain is Alanine racemase (alr), found in Methylobacterium nodulans (strain LMG 21967 / CNCM I-2342 / ORS 2060).